A 131-amino-acid polypeptide reads, in one-letter code: 14.7 kDa heat shock protein (131 aa).

The segment covering 1–11 (MSRNMEVNAGS) has biased composition (polar residues). The segment at 1–20 (MSRNMEVNAGSSGEIPSPIR) is disordered. The sHSP domain maps to 22–131 (RFQKSGSQAV…INVKERILHY (110 aa)).

Belongs to the small heat shock protein (HSP20) family. As to quaternary structure, may form oligomeric structures.

The protein resides in the cytoplasm. In Arabidopsis thaliana (Mouse-ear cress), this protein is 14.7 kDa heat shock protein (HSP14.7).